The following is a 192-amino-acid chain: Protein GrpE (192 aa).

A disordered region spans residues 1-34; that stretch reads MSSKEQKTPNEQVSEEMENTAEQQVEATQETGEC. Over residues 20–31 the composition is skewed to polar residues; sequence TAEQQVEATQET.

The protein belongs to the GrpE family. Homodimer.

The protein resides in the cytoplasm. Functionally, participates actively in the response to hyperosmotic and heat shock by preventing the aggregation of stress-denatured proteins, in association with DnaK and GrpE. It is the nucleotide exchange factor for DnaK and may function as a thermosensor. Unfolded proteins bind initially to DnaJ; upon interaction with the DnaJ-bound protein, DnaK hydrolyzes its bound ATP, resulting in the formation of a stable complex. GrpE releases ADP from DnaK; ATP binding to DnaK triggers the release of the substrate protein, thus completing the reaction cycle. Several rounds of ATP-dependent interactions between DnaJ, DnaK and GrpE are required for fully efficient folding. This chain is Protein GrpE, found in Yersinia pseudotuberculosis serotype I (strain IP32953).